Reading from the N-terminus, the 278-residue chain is ATP synthase subunit a (278 aa).

6 helical membrane-spanning segments follow: residues 41 to 61 (FLNI…LLFF), 108 to 128 (LTIF…VDFV), 149 to 168 (INIT…YFGI), 180 to 200 (FFFQ…LELI), 222 to 242 (LIFI…LSVP), and 244 to 264 (AIFH…LTII).

Belongs to the ATPase A chain family. In terms of assembly, F-type ATPases have 2 components, CF(1) - the catalytic core - and CF(0) - the membrane proton channel. CF(1) has five subunits: alpha(3), beta(3), gamma(1), delta(1), epsilon(1). CF(0) has three main subunits: a(1), b(2) and c(9-12). The alpha and beta chains form an alternating ring which encloses part of the gamma chain. CF(1) is attached to CF(0) by a central stalk formed by the gamma and epsilon chains, while a peripheral stalk is formed by the delta and b chains.

The protein resides in the cell membrane. In terms of biological role, key component of the proton channel; it plays a direct role in the translocation of protons across the membrane. The polypeptide is ATP synthase subunit a (Wigglesworthia glossinidia brevipalpis).